The chain runs to 391 residues: Ectodysplasin-A (391 aa).

Basic and acidic residues predominate over residues 1–21; the sequence is MGYPEVERREPLPAAAPRERG. Positions 1–28 are disordered; the sequence is MGYPEVERREPLPAAAPRERGSQGCGCR. Residues 1-41 lie on the Cytoplasmic side of the membrane; the sequence is MGYPEVERREPLPAAAPRERGSQGCGCRGAPARAGEGNSCR. The chain crosses the membrane as a helical; Signal-anchor for type II membrane protein span at residues 42 to 62; sequence LFLGFFGLSLALHLLTLCCYL. Residues 63–391 are Extracellular-facing; that stretch reads ELRSELRRER…AIRLGEAPAS (329 aa). Disordered stretches follow at residues 73–130 and 145–245; these read GAES…SQDG and SYSE…GTRE. The span at 76-96 shows a compositional bias: low complexity; the sequence is SRFSGPGTPGTSGTLSSPGGL. Residues 180-229 enclose the Collagen-like domain; the sequence is GPPGPNGPPGPPGPPGPQGPPGIPGIPGIPGTTVMGPPGPPGPPGPQGPP. 2 stretches are compositionally biased toward pro residues: residues 181–203 and 216–228; these read PPGP…PGIP and PPGP…PQGP. A THD domain is found at 249–385; it reads AVVHLQGQGS…HTTFFGAIRL (137 aa). N-linked (GlcNAc...) asparagine glycosylation occurs at asparagine 313. Cysteines 332 and 346 form a disulfide. Asparagine 372 carries an N-linked (GlcNAc...) asparagine glycan.

Belongs to the tumor necrosis factor family. In terms of assembly, homotrimer. The homotrimers may then dimerize and form higher-order oligomers. N-glycosylated. Post-translationally, processing by furin produces a secreted form.

The protein localises to the cell membrane. Its subcellular location is the secreted. In terms of biological role, cytokine which is involved in epithelial-mesenchymal signaling during morphogenesis of ectodermal organs. Functions as a ligand activating the DEATH-domain containing receptors EDAR and EDA2R. Isoform A1 binds only to the receptor EDAR, while isoform A2 binds exclusively to the receptor EDA2R. May also play a role in cell adhesion. Functionally, isoform A1 binds only to the receptor EDAR, while isoform A2 binds exclusively to the receptor EDA2R. Isoform A2 binds exclusively to the receptor EDA2R. This chain is Ectodysplasin-A (EDA), found in Bos taurus (Bovine).